Consider the following 270-residue polypeptide: Formamidopyrimidine-DNA glycosylase (270 aa).

Proline 2 (schiff-base intermediate with DNA) is an active-site residue. The Proton donor role is filled by glutamate 3. Lysine 58 serves as the catalytic Proton donor; for beta-elimination activity. Residues histidine 91, arginine 110, and arginine 151 each coordinate DNA. The FPG-type zinc finger occupies 236–270 (FVYGRGGQPCKVCGTELREVKLGQRASVFCPKCQR). Residue arginine 260 is the Proton donor; for delta-elimination activity of the active site.

This sequence belongs to the FPG family. As to quaternary structure, monomer. The cofactor is Zn(2+).

It catalyses the reaction Hydrolysis of DNA containing ring-opened 7-methylguanine residues, releasing 2,6-diamino-4-hydroxy-5-(N-methyl)formamidopyrimidine.. The enzyme catalyses 2'-deoxyribonucleotide-(2'-deoxyribose 5'-phosphate)-2'-deoxyribonucleotide-DNA = a 3'-end 2'-deoxyribonucleotide-(2,3-dehydro-2,3-deoxyribose 5'-phosphate)-DNA + a 5'-end 5'-phospho-2'-deoxyribonucleoside-DNA + H(+). Functionally, involved in base excision repair of DNA damaged by oxidation or by mutagenic agents. Acts as a DNA glycosylase that recognizes and removes damaged bases. Has a preference for oxidized purines, such as 7,8-dihydro-8-oxoguanine (8-oxoG). Has AP (apurinic/apyrimidinic) lyase activity and introduces nicks in the DNA strand. Cleaves the DNA backbone by beta-delta elimination to generate a single-strand break at the site of the removed base with both 3'- and 5'-phosphates. The chain is Formamidopyrimidine-DNA glycosylase from Pseudomonas entomophila (strain L48).